The primary structure comprises 303 residues: Protoheme IX farnesyltransferase (303 aa).

The next 9 membrane-spanning stretches (helical) occupy residues 17-37, 42-62, 91-111, 114-134, 142-162, 168-188, 208-228, 231-251, and 270-290; these read GVVMLLMVTAVAGMFLATEPA, LATFIPAFVGLSLAMMASAAI, AAITFAVLLATASMIMLYFLV, LTAWLTLFGFVGYAFIYTLYL, IVIGGIAGAIPPLLGWTAVTG, AWLLVLIIFVWTPPHFWALAI, IPFTRESVLYYTILLFICTLL, LTGMSDLIYLLSALILGLVFL, and FGYSITYLFALFTALLVDHYL.

Belongs to the UbiA prenyltransferase family. Protoheme IX farnesyltransferase subfamily.

It is found in the cell inner membrane. It catalyses the reaction heme b + (2E,6E)-farnesyl diphosphate + H2O = Fe(II)-heme o + diphosphate. The protein operates within porphyrin-containing compound metabolism; heme O biosynthesis; heme O from protoheme: step 1/1. Functionally, converts heme B (protoheme IX) to heme O by substitution of the vinyl group on carbon 2 of heme B porphyrin ring with a hydroxyethyl farnesyl side group. In Alcanivorax borkumensis (strain ATCC 700651 / DSM 11573 / NCIMB 13689 / SK2), this protein is Protoheme IX farnesyltransferase.